We begin with the raw amino-acid sequence, 1450 residues long: DNA-directed RNA polymerase RPB1 homolog (1450 aa).

It belongs to the RNA polymerase beta' chain family. Part of the viral DNA-directed RNA polymerase that consists of 8 polII-like subunits (RPB1, RPB2, RPB3, RPB5, RPB6, RPB7, RPB9, RPB10), a capping enzyme and a termination factor.

It localises to the virion. The enzyme catalyses RNA(n) + a ribonucleoside 5'-triphosphate = RNA(n+1) + diphosphate. Its function is as follows. Catalytic component of the DNA-directed RNA polymerase (RNAP) that catalyzes the transcription in the cytoplasm of viral DNA into RNA using the four ribonucleoside triphosphates as substrates. Forms the polymerase active center together with RPB2. Part of the core element with the central large cleft, the clamp element that moves to open and close the cleft and the jaws that are thought to grab the incoming DNA template. This chain is DNA-directed RNA polymerase RPB1 homolog, found in African swine fever virus (isolate Tick/South Africa/Pretoriuskop Pr4/1996) (ASFV).